The primary structure comprises 503 residues: Maturase K (503 aa).

It belongs to the intron maturase 2 family. MatK subfamily.

The protein resides in the plastid. It localises to the chloroplast. Functionally, usually encoded in the trnK tRNA gene intron. Probably assists in splicing its own and other chloroplast group II introns. The protein is Maturase K of Caragana arborescens (Siberian pea tree).